We begin with the raw amino-acid sequence, 120 residues long: Large ribosomal subunit protein uL18 (120 aa).

This sequence belongs to the universal ribosomal protein uL18 family. Part of the 50S ribosomal subunit; part of the 5S rRNA/L5/L18/L25 subcomplex. Contacts the 5S and 23S rRNAs.

This is one of the proteins that bind and probably mediate the attachment of the 5S RNA into the large ribosomal subunit, where it forms part of the central protuberance. The chain is Large ribosomal subunit protein uL18 from Bacillus cereus (strain G9842).